A 384-amino-acid chain; its full sequence is MADKFYRPTYLKVDLEAILKNYQVLGKLQPNKTVMPVIKANAYGMGSVNVGHYLKKHGAEFFAVATLDEAIELRMHGIDTKILILGVVMPKDINKAIQHRVALTVPSYAWLNEAIKYLDEDLEKDLWLHVKIDTGMGRLGVKSAEDYQKTVALIQSHEHLIFEGVFTHFAQADEDSPHTKEQYEIFENWVDTIPHPSYVHAQNSAGTILFDAPICNMVRTGISLYGYYPSEYVEEQTNAELYPSAEWITEIVDIKYLNIGDTVSYGSTYTAEKSEKIAILPVGYADGFPRMMQGTNVEVNGQQCTIIGRVCMDQMMIALPENEDINVGDKVTLLNREHSGPQSLLSHAKQQQTINYEVLCRIGRRVPRIYEPEKVFDIVNELQK.

Residue Lys-39 is the Proton acceptor; specific for D-alanine of the active site. At Lys-39 the chain carries N6-(pyridoxal phosphate)lysine. Arg-138 is a binding site for substrate. Tyr-265 (proton acceptor; specific for L-alanine) is an active-site residue. Met-312 is a binding site for substrate.

This sequence belongs to the alanine racemase family. Pyridoxal 5'-phosphate serves as cofactor.

It catalyses the reaction L-alanine = D-alanine. It participates in amino-acid biosynthesis; D-alanine biosynthesis; D-alanine from L-alanine: step 1/1. Catalyzes the interconversion of L-alanine and D-alanine. May also act on other amino acids. This chain is Alanine racemase (alr), found in Staphylococcus carnosus (strain TM300).